The following is a 343-amino-acid chain: Methionine import ATP-binding protein MetN 1 (343 aa).

In terms of domain architecture, ABC transporter spans 2-241 (IKLSNITKVF…PKTPLAQKFI (240 aa)). An ATP-binding site is contributed by 38–45 (GASGAGKS).

This sequence belongs to the ABC transporter superfamily. Methionine importer (TC 3.A.1.24) family. As to quaternary structure, the complex is composed of two ATP-binding proteins (MetN), two transmembrane proteins (MetI) and a solute-binding protein (MetQ).

It is found in the cell inner membrane. The catalysed reaction is L-methionine(out) + ATP + H2O = L-methionine(in) + ADP + phosphate + H(+). It catalyses the reaction D-methionine(out) + ATP + H2O = D-methionine(in) + ADP + phosphate + H(+). Part of the ABC transporter complex MetNIQ involved in methionine import. Responsible for energy coupling to the transport system. This chain is Methionine import ATP-binding protein MetN 1, found in Salmonella typhimurium (strain LT2 / SGSC1412 / ATCC 700720).